The primary structure comprises 511 residues: MEFKDLISSLNLIRLLPEGIVTILLVFILLIDLTFQKRVLSWLLYIPLVGLVCSMVVLLRQWGSQDTLSFLGSFQGDSLSIAFRFFILLSAVLCILLSKEYVERSRTALTEFFVLLLTAVIGGMLLSGANDLIMIFLSLETLGLSSYLLTGYMKKDLRSNEAAIKYLLIGAASSSILLYGLSLLYGLSGGAIEISTIAKNIVDKGLSQSFASWVALIFITVGIGFKVAAAPFHQWAPDVYEGSPTPVVAFLSVGSKAAGLALATRILTTLFPYLTNEWHLLFQVLASLSMILGNLIAISQTSMKRMLGYSSVSQAGFLMIGLIAGNPNGYSSMLVYMLLYIFMNLGAFACIILFGLKAGTDQIRDYAGLYRKDPFLVFCFSISLLSLGGIPPLAGFFGKLYLFWSGWQSGFYILVFIGLFTSVISIYYYLRVIKVMIVTEPQEMSIYVQRYTQRRWSITQLQPIELGIGLCVLGSVLAGVLVNPIINIAQQTVLYTPLLQQSEELMRTLTF.

Helical transmembrane passes span 15–35, 39–59, 78–98, 108–128, 132–152, 167–187, 210–230, 244–264, 278–298, 306–326, 334–354, 377–397, 410–430, and 466–486; these read LLPE…DLTF, VLSW…VVLL, SLSI…ILLS, ALTE…LLSG, LIMI…LTGY, LLIG…LYGL, FASW…VAAA, PTPV…ALAT, WHLL…LIAI, MLGY…IAGN, LVYM…IILF, VFCF…AGFF, GFYI…YYYL, and LGIG…NPII.

It belongs to the complex I subunit 2 family. NDH is composed of at least 16 different subunits, 5 of which are encoded in the nucleus.

Its subcellular location is the plastid. It localises to the chloroplast thylakoid membrane. It carries out the reaction a plastoquinone + NADH + (n+1) H(+)(in) = a plastoquinol + NAD(+) + n H(+)(out). It catalyses the reaction a plastoquinone + NADPH + (n+1) H(+)(in) = a plastoquinol + NADP(+) + n H(+)(out). NDH shuttles electrons from NAD(P)H:plastoquinone, via FMN and iron-sulfur (Fe-S) centers, to quinones in the photosynthetic chain and possibly in a chloroplast respiratory chain. The immediate electron acceptor for the enzyme in this species is believed to be plastoquinone. Couples the redox reaction to proton translocation, and thus conserves the redox energy in a proton gradient. The protein is NAD(P)H-quinone oxidoreductase subunit 2, chloroplastic of Chlorokybus atmophyticus (Soil alga).